Here is a 155-residue protein sequence, read N- to C-terminus: MSLNITENESISTAVIDAINSGATLKDINAIPDDMMDDIYSYAYDFYNKGRIEEAEVFFRFLCIYDFYNVDYIMGLAAIYQIKEQFQQAADLYAVAFALGKNDYTPVFHTGQCQLRLKAPLKAKECFELVIQHSNDEKLKIKAQSYLDAIQDIKE.

It belongs to the LcrH/SycD chaperone family.

Its subcellular location is the cytoplasm. In terms of biological role, assists the correct folding of nascent IpaB. Once it is bound to IpaB, it binds to IpaC and impedes their premature association that would lead to their degradation in the absence of IpcG. The polypeptide is Chaperone protein IpgC (ipgC) (Shigella dysenteriae).